Here is a 327-residue protein sequence, read N- to C-terminus: Petrobactin synthase (327 aa).

The catalysed reaction is N(8)-citryl-spermidine + 3,4-dihydroxybenzoyl-[aryl-carrier protein] = N(1)-(3,4-dihydroxybenzoyl)-N(8)-citryl-spermidine + holo-[aryl-carrier protein] + H(+). The enzyme catalyses N(8),N'(8)-citryl-bis(spermidine) + 3,4-dihydroxybenzoyl-[aryl-carrier protein] = N(1)-(3,4-dihydroxybenzoyl)-N(8),N'(8)-citryl-bis(spermidine) + holo-[aryl-carrier protein] + H(+). It catalyses the reaction N(1)-(3,4-dihydroxybenzoyl)-N(8),N'(8)-citryl-bis(spermidine) + 3,4-dihydroxybenzoyl-[aryl-carrier protein] = petrobactin + holo-[aryl-carrier protein] + H(+). Its pathway is siderophore biosynthesis; petrobactin biosynthesis. Involved in the biosynthesis of petrobactin, a catecholate siderophore that functions in both iron acquisition and virulence. Transfers the activated 3,4-dihydroxybenzoate (3,4-DHBA) moiety from 3,4-DHBA-loaded AsbD to different receipient molecules, including N-citryl-spermidine, N8,N'8-citryl-bis(spermidine) and N1-(3,4-dihydroxybenzoyl)-N8,N'8-citryl-bis(spermidine). Also catalyzes the transfer of the activated 3,4-DHBA moiety from 3,4-DHBA-loaded AsbD to spermidine to generate DHB-spermidine (DHB-SP). The protein is Petrobactin synthase of Bacillus anthracis.